Reading from the N-terminus, the 392-residue chain is Chorismate synthase (392 aa).

Residues Arg-39 and Arg-45 each contribute to the NADP(+) site. FMN is bound by residues 131-133 (RSS), 255-256 (NA), Gly-300, 315-319 (KPIPT), and Arg-341.

It belongs to the chorismate synthase family. Homotetramer. Requires FMNH2 as cofactor.

It catalyses the reaction 5-O-(1-carboxyvinyl)-3-phosphoshikimate = chorismate + phosphate. Its pathway is metabolic intermediate biosynthesis; chorismate biosynthesis; chorismate from D-erythrose 4-phosphate and phosphoenolpyruvate: step 7/7. In terms of biological role, catalyzes the anti-1,4-elimination of the C-3 phosphate and the C-6 proR hydrogen from 5-enolpyruvylshikimate-3-phosphate (EPSP) to yield chorismate, which is the branch point compound that serves as the starting substrate for the three terminal pathways of aromatic amino acid biosynthesis. This reaction introduces a second double bond into the aromatic ring system. The sequence is that of Chorismate synthase from Leuconostoc mesenteroides subsp. mesenteroides (strain ATCC 8293 / DSM 20343 / BCRC 11652 / CCM 1803 / JCM 6124 / NCDO 523 / NBRC 100496 / NCIMB 8023 / NCTC 12954 / NRRL B-1118 / 37Y).